The following is a 318-amino-acid chain: Taste receptor type 2 member 7 (318 aa).

Residues 1-9 lie on the Extracellular side of the membrane; it reads MTDKVQTTL. The helical transmembrane segment at 10-30 threads the bilayer; it reads LFLAVGEFSVGILGNAFIGLV. The Cytoplasmic portion of the chain corresponds to 31–55; that stretch reads NCMDWIKKRKIASIDLILTSLAISR. The chain crosses the membrane as a helical span at residues 56–76; that stretch reads ICLLCVILLDCFILVLYPDVY. The Extracellular segment spans residues 77 to 94; that stretch reads ATGKEMRIIDFFWILTNH. A helical membrane pass occupies residues 95–115; the sequence is LSIWFATCLSIYYFFKIANFF. The Cytoplasmic segment spans residues 116–128; sequence HPLFLWMKWRIDR. Residues 129-149 form a helical membrane-spanning segment; sequence VISWILLGCMVLSVFISLPAT. Residues 150–187 are Extracellular-facing; the sequence is ENLNADFRFCVKAKRKTNLTWSCRVNKTQHASIKLLLN. Asparagine 167 and asparagine 175 each carry an N-linked (GlcNAc...) asparagine glycan. The chain crosses the membrane as a helical span at residues 188 to 208; that stretch reads LATLLPFCVCLMSFFLLILSL. Residues 209–235 lie on the Cytoplasmic side of the membrane; the sequence is RRHIRRMQLSATGCRDPSTEAHVRALK. Residues 236–256 traverse the membrane as a helical segment; it reads AVISFLLLFIAYYLSFLIATS. Residues 257–266 lie on the Extracellular side of the membrane; the sequence is SYFMPETELA. Residues 267-287 form a helical membrane-spanning segment; sequence VIFGESIALIYPSSHSFILIL. Topologically, residues 288–318 are cytoplasmic; the sequence is GNNKLRHASLKVIWKVMSILKGRKFQQHKQI.

It belongs to the G-protein coupled receptor T2R family.

Its subcellular location is the membrane. Gustducin-coupled receptor implicated in the perception of bitter compounds in the oral cavity and the gastrointestinal tract. Signals through PLCB2 and the calcium-regulated cation channel TRPM5. The chain is Taste receptor type 2 member 7 (TAS2R7) from Pongo pygmaeus (Bornean orangutan).